Consider the following 521-residue polypeptide: Tigger transposable element-derived protein 6 (521 aa).

The 52-residue stretch at 3–54 (NKGNKKRRQFSLEEKMKVVGAVDSGKRKGDVAKEFGITPSTLSTFLKDRTKF) folds into the HTH psq-type domain. DNA-binding regions (H-T-H motif) lie at residues 30 to 50 (KGDVAKEFGITPSTLSTFLKD) and 99 to 130 (SVIRKKALNLANMLGYDNFQASVGWLNRFRDR). An HTH CENPB-type domain is found at 66–137 (QRKRMRSALY…RDRHGIALKA (72 aa)). Positions 170-372 (YSPDDIFNAD…VKPSTVVKCW (203 aa)) constitute a DDE-1 domain.

This sequence belongs to the tigger transposable element derived protein family.

It is found in the nucleus. The sequence is that of Tigger transposable element-derived protein 6 (TIGD6) from Homo sapiens (Human).